A 506-amino-acid chain; its full sequence is Histidine ammonia-lyase (506 aa).

The 5-imidazolinone (Ala-Gly) cross-link spans 144–146 (ASG). The residue at position 145 (Ser-145) is a 2,3-didehydroalanine (Ser).

It belongs to the PAL/histidase family. Post-translationally, contains an active site 4-methylidene-imidazol-5-one (MIO), which is formed autocatalytically by cyclization and dehydration of residues Ala-Ser-Gly.

Its subcellular location is the cytoplasm. It catalyses the reaction L-histidine = trans-urocanate + NH4(+). It functions in the pathway amino-acid degradation; L-histidine degradation into L-glutamate; N-formimidoyl-L-glutamate from L-histidine: step 1/3. The chain is Histidine ammonia-lyase from Legionella pneumophila subsp. pneumophila (strain Philadelphia 1 / ATCC 33152 / DSM 7513).